Reading from the N-terminus, the 213-residue chain is Adenylate kinase (213 aa).

14-19 contributes to the ATP binding site; it reads GSGKGT. Positions 34 to 63 are NMP; that stretch reads SSGNLLRSAIKASTPLGIKASEYIDEGQLV. Residues S35, R40, 61-63, 89-92, and Q96 contribute to the AMP site; these read QLV and GFPR. The interval 129-162 is LID; the sequence is SRFICPSCNFVYNQSQGFRECPTCHSELVRRSDD. Residue R130 coordinates ATP. Zn(2+) is bound by residues C133 and C136. 139–140 is a binding site for ATP; the sequence is VY. The Zn(2+) site is built by C149 and C152. AMP-binding residues include R159 and R170. K198 is a binding site for ATP.

It belongs to the adenylate kinase family. Monomer.

Its subcellular location is the cytoplasm. The enzyme catalyses AMP + ATP = 2 ADP. The protein operates within purine metabolism; AMP biosynthesis via salvage pathway; AMP from ADP: step 1/1. Functionally, catalyzes the reversible transfer of the terminal phosphate group between ATP and AMP. Plays an important role in cellular energy homeostasis and in adenine nucleotide metabolism. In Chlamydia felis (strain Fe/C-56) (Chlamydophila felis), this protein is Adenylate kinase.